A 276-amino-acid chain; its full sequence is Large ribosomal subunit protein uL2c (276 aa).

A disordered region spans residues 225–276 (AMNPVDHPHGGGEGRTPIGRKKPVTPWGYSALGKKSRKRNRYSDASILRRRE).

It belongs to the universal ribosomal protein uL2 family. In terms of assembly, part of the 50S ribosomal subunit.

The protein resides in the plastid. It localises to the chloroplast. The sequence is that of Large ribosomal subunit protein uL2c (rpl2) from Pinus thunbergii (Japanese black pine).